The chain runs to 463 residues: Peptidylprolyl isomerase cyp7 (463 aa).

In terms of domain architecture, PPIase cyclophilin-type spans 11–166 (ATGTVILKTT…FPPKIISTEV (156 aa)). The interval 224–275 (VKKPLRQKTPVSRSSDTTTELSKDLISSSSSIHSTYSSAQTGLTSAKVSSDE) is disordered. Over residues 232–243 (TPVSRSSDTTTE) the composition is skewed to polar residues. Positions 250–261 (SSSSSIHSTYSS) are enriched in low complexity. The span at 262-271 (AQTGLTSAKV) shows a compositional bias: polar residues.

Belongs to the cyclophilin-type PPIase family. CWC27 subfamily. In terms of assembly, belongs to the 40S cdc5-associated complex (or cwf complex), a spliceosome sub-complex reminiscent of a late-stage spliceosome composed of the U2, U5 and U6 snRNAs and at least brr2, cdc5, cwf2/prp3, cwf3/syf1, cwf4/syf3, cwf5/ecm2, spp42/cwf6, cwf7/spf27, cwf8, cwf9, cwf10, cwf11, cwf12, prp45/cwf13, cwf14, cwf15, cwf16, cwf17, cwf18, cwf19, cwf20, cwf21, cwf22, cwf23, cwf24, cwf25, cwf26, cyp7/cwf27, cwf28, cwf29/ist3, lea1, msl1, prp5/cwf1, prp10, prp12/sap130, prp17, prp22, sap61, sap62, sap114, sap145, slu7, smb1, smd1, smd3, smf1, smg1 and syf2.

The protein localises to the cytoplasm. The protein resides in the nucleus. The enzyme catalyses [protein]-peptidylproline (omega=180) = [protein]-peptidylproline (omega=0). Its function is as follows. PPIases accelerate the folding of proteins. Catalyzes the cis-trans isomerization of proline imidic peptide bonds in oligopeptides. Involved in pre-mRNA splicing. The sequence is that of Peptidylprolyl isomerase cyp7 (cyp7) from Schizosaccharomyces pombe (strain 972 / ATCC 24843) (Fission yeast).